A 90-amino-acid chain; its full sequence is Inner kinetochore subunit MHF1 (90 aa).

This sequence belongs to the TAF9 family. CENP-S/MHF1 subfamily. The MHF histone-fold complex is a heterotetramer of 2 MHF1-MHF2 heterodimers. Together with MPH1/FANCM, forms the FANCM-MHF complex. Component of the inner kinetochore constitutive centromere-associated network (CCAN) (also known as central kinetochore CTF19 complex in yeast), which is composed of at least AME1, CHL4, CNN1, CTF3, CTF19, IML3, MCM16, MCM21, MCM22, MHF1, MHF2, MIF2, NKP1, NKP2, OKP1 and WIP1.

In terms of biological role, dsDNA-binding component of a FANCM-MHF complex involved in DNA damage repair and genome maintenance. FANCM-MHF promotes gene conversion at blocked replication forks, probably by reversal of the stalled fork. Component of the kinetochore, a multiprotein complex that assembles on centromeric DNA and attaches chromosomes to spindle microtubules, mediating chromosome segregation and sister chromatid segregation during meiosis and mitosis. Component of the inner kinetochore constitutive centromere-associated network (CCAN), which serves as a structural platform for outer kinetochore assembly. In Saccharomyces cerevisiae (strain ATCC 204508 / S288c) (Baker's yeast), this protein is Inner kinetochore subunit MHF1.